The sequence spans 652 residues: MSTAPSLSALRSSKHSGGGGGGGGGGGSGGGSADPAWTSALSGNCSGHGPGSSPAGSTKPFVHAVPPSDPLRQANRLPIKVLKMLTARTGHILHPEYLQPLPSTPVSPIELDAKKSPLALLAQTCSQIGKPDPSPSSKLSSVASNGGGAGGAGNGAGGDKDAKSGPLKLSDIGVEDKSSFKPYSKPGSDKKEPGGGGGGGGGGGGGGGVAAEKSGFRVPSATCQPFTPRTGSPSSSASACSPGGMLPSAGGGPEGKDDKKDPEAGGGGSSKGSGGASADGVPAGLGHGRISCGGGINVDVNQHSEGGPGGKALGSDCGGSSSSSSGSGPSAPTSSSVLGSGLVAPVSPYKPGQTVFPLPPAGMTYPGSLAGAYAGYPPQFLPHGVALDPTKPGSLVGAQLAAAAAGSLGCSKPAGSSPLAGASPPSVMTASLCRDPYCLSYHCASHLAGAAAASASCAHDPAAAAAALKSGYPLVYPTHPLHGVHSSLTAAAAAGATPPSLAGHPLYPYGFMLPNDPLPHICNWVSANGPCDKRFATSEELLSHLRTHTAFPGTDKLLSGYPSSSSLASAAAAAMACHMHIPTSGAPGSPGTLALRSPHHALGLSSRYHPYSKSPLPTPGAPVPVPAATGPYYSPYALYGQRLTTASALGYQ.

Over residues 1 to 11 (MSTAPSLSALR) the composition is skewed to polar residues. A disordered region spans residues 1 to 72 (MSTAPSLSAL…HAVPPSDPLR (72 aa)). Residues 16-32 (SGGGGGGGGGGGSGGGS) show a composition bias toward gly residues. The residue at position 107 (Ser-107) is a Phosphoserine. 2 disordered regions span residues 126-283 (SQIG…GVPA) and 296-338 (INVD…SSVL). Over residues 135-144 (PSSKLSSVAS) the composition is skewed to low complexity. Gly residues-rich tracts occupy residues 145-157 (NGGG…NGAG) and 194-209 (GGGG…GGGV). Lys-213 carries the post-translational modification N6-acetyllysine. Over residues 221–230 (ATCQPFTPRT) the composition is skewed to polar residues. The span at 231–244 (GSPSSSASACSPGG) shows a compositional bias: low complexity. Phosphoserine occurs at positions 235 and 241. Basic and acidic residues predominate over residues 254–263 (EGKDDKKDPE). Over residues 264 to 283 (AGGGGSSKGSGGASADGVPA) the composition is skewed to gly residues. A compositionally biased stretch (low complexity) spans 314–336 (GSDCGGSSSSSSGSGPSAPTSSS). The C2H2-type zinc finger occupies 520–548 (HICNWVSANGPCDKRFATSEELLSHLRTH). Residue Arg-642 is modified to Omega-N-methylarginine.

The protein belongs to the Elbow/Noc family.

It is found in the nucleus. In terms of biological role, may function as a transcriptional repressor. This chain is Zinc finger protein 503 (Znf503), found in Mus musculus (Mouse).